A 128-amino-acid polypeptide reads, in one-letter code: LIM domain-containing protein 2 (128 aa).

Residue Met-1 is modified to N-acetylmethionine. The interval 1 to 25 is disordered; that stretch reads MFQAAGAAQATPSHEAKGGGSSSTV. Positions 39-99 constitute an LIM zinc-binding domain; it reads ETCAACQKTV…KPHFQQLFKS (61 aa). Zn(2+) contacts are provided by Cys-41, Cys-44, His-62, Cys-65, Cys-68, Cys-71, Cys-89, and His-92.

In terms of assembly, interacts with ILK.

It localises to the cytoplasm. The protein resides in the nucleus. In terms of biological role, acts as an activator of the protein-kinase ILK, thereby regulating cell motility. The chain is LIM domain-containing protein 2 (LIMD2) from Bos taurus (Bovine).